Reading from the N-terminus, the 2319-residue chain is MGPGARGRRRRRRLMALPPPPPPMRALPLLLLLLAGLGAAAPPCLDGSPCANGGRCTHQQPSREAACLCLPGWVGERCQLEDPCHSGPCAGRGVCQSSVVAGVARFSCRCLRGFRGPDCSLPDPCFSSPCAHGAPCSVGSDGRYACACPPGYQGRNCRSDIDECRAGASCRHGGTCINTPGSFHCLCPLGYTGLLCENPIVPCAPSPCRNGGTCRQSSDVTYDCACLPGFEGQNCEVNVDDCPGHRCLNGGTCVDGVNTYNCQCPPEWTGQFCTEDVDECQLQPNACHNGGTCFNLLGGHSCVCVNGWTGESCSQNIDDCATAVCFHGATCHDRVASFYCACPMGKTGLLCHLDDACVSNPCHEDAICDTNPVSGRAICTCPPGFTGGACDQDVDECSIGANPCEHLGRCVNTQGSFLCQCGRGYTGPRCETDVNECLSGPCRNQATCLDRIGQFTCICMAGFTGTFCEVDIDECQSSPCVNGGVCKDRVNGFSCTCPSGFSGSTCQLDVDECASTPCRNGAKCVDQPDGYECRCAEGFEGTLCERNVDDCSPDPCHHGRCVDGIASFSCACAPGYTGIRCESQVDECRSQPCRYGGKCLDLVDKYLCRCPPGTTGVNCEVNIDDCASNPCTFGVCRDGINRYDCVCQPGFTGPLCNVEINECASSPCGEGGSCVDGENGFHCLCPPGSLPPLCLPANHPCAHKPCSHGVCHDAPGGFQCVCDPGWSGPRCSQSLAPDACESQPCQAGGTCTSDGIGFHCTCAPGFQGHQCEVLSPCTPSLCEHGGHCESDPDQLTVCSCPPGWQGPRCQQDVDECAGASPCGPHGTCTNLPGSFRCICHGGYTGPFCDQDIDDCDPNPCLNGGSCQDGVGSFSCSCLSGFAGPRCARDVDECLSSPCGPGTCTDHVASFTCTCPPGYGGFHCETDLLDCSPSSCFNGGTCVDGVNSFSCLCRPGYTGTHCQYKVDPCFSRPCLHGGICNPTHSGFECTCREGFTGNQCQNPVDWCSQAPCQNGGRCVQTGAYCICPPEWSGPLCDIPSLPCTEAAAHMGVRLEQLCQAGGQCIDKDHSHYCVCPEGRMGSHCEQEVDPCTAQPCQHGGTCRGYMGGYVCECPTGYSGDSCEDDVDECASQPCQNGGSCIDLVAHYLCSCPPGTLGVLCEINEDDCGPGPSLDSGLRCLHNGTCVDLVGGFRCNCPPGYTGLHCEADINECRPGTCHAAHTRDCLQDPGGHFRCICLPGFTGPRCQTALFPCESQPCQHGGQCRPSLGRGGGLTFTCHCVQPFWGLRCERVARSCRELQCPVGIPCQQTARGPRCACPPGLSGPSCRVSRASPSGATNTSCAATPCLHGGSCLPVQSVPFFRCVCAPGWGGPRCETPSAAPEVPEEPRCPRAACQAKRGDQNCDRECNSPGCGWDGGDCSLNVDDPWRQCEALQCWRLFNNSRCDPACSSPACLYDNFDCYSGGRDRTCNPVYKKYCADHFADGRCDQGCNTEECGWDGLDCASEVPALLARGVLVLTVLLPPEELLRSSADFLQRLSAILRTSLRFRLDARGQAMVFPYHRPSPGSESRVRRELGPEVIGSVVMLEIDNRLCLKSAENDHCFPDAQSAADYLGALSAVERLDFPYPLRDVRGEPLEPPEQSVPLLPLLVAGAVFLLVIFVLGVMVARRKREHSTLWFPEGFALHKDIAAGHKGRREPVGQDALGMKNMTKGESLMGEVATDWNDSECPEAKRLKVEEPGMGAEEPVDCRQWTQHHLVAADIRVAPAMALTPPQGDADADGMDVNVRGPDGFTPLMLASFCGGALEPMPAEEDEADDTSASIISDLICQGAQLGARTDRTGETALHLAARYARADAAKRLLDAGADTNAQDHSGRTPLHTAVTADAQGVFQILIRNRSTDLDARMADGSTALILAARLAVEGMVEELIASHADVNAVDELGKSALHWAAAVNNVEATLALLKNGANKDMQDSKEETPLFLAAREGSYEAAKLLLDHFANREITDHLDRLPRDVAQERLHQDIVRLLDQPSGPRSPSGPHGLGPLLCPPGAFLPGLKAVQSGTKKSRRPPGKTGLGPQGTRGRGKKLTLACPGPLADSSVTLSPVDSLDSPRPFGGPPASPGGFPLEGPYATTATTVSLAQLGASRAGPLGRQPPGGCVLSLGLLNPVAVPLDWARLPPPAPPGPSFLLPLAPGSQLLNPATPVSPHERPPPYLAAPGHGEEYPAAGTHSSPTKARFLRVPSEHPYLTPSPESPEHWASPSPPSLSDWSDSTPSPATATSATAAGALPAQPHPISVPSLPQSQTQLGPQPEVTPKRQVMA.

Basic residues predominate over residues 1–14 (MGPGARGRRRRRRL). The tract at residues 1-20 (MGPGARGRRRRRRLMALPPP) is disordered. The N-terminal stretch at 1–40 (MGPGARGRRRRRRLMALPPPPPPMRALPLLLLLLAGLGAA) is a signal peptide. EGF-like domains follow at residues 41–79 (APPC…ERCQ), 80–120 (LEDP…PDCS), and 121–158 (LPDP…RNCR). The Extracellular portion of the chain corresponds to 41–1645 (APPCLDGSPC…LEPPEQSVPL (1605 aa)). Disulfide bonds link Cys44-Cys56, Cys50-Cys67, Cys69-Cys78, Cys84-Cys95, Cys89-Cys108, Cys110-Cys119, Cys125-Cys136, Cys130-Cys146, Cys148-Cys157, Cys164-Cys176, Cys170-Cys185, Cys187-Cys196, Cys203-Cys214, Cys208-Cys224, Cys226-Cys235, Cys242-Cys253, Cys247-Cys262, Cys264-Cys273, Cys280-Cys293, Cys287-Cys302, Cys304-Cys313, Cys320-Cys331, Cys325-Cys340, Cys342-Cys351, Cys357-Cys368, Cys362-Cys379, Cys381-Cys390, Cys397-Cys410, Cys404-Cys419, Cys421-Cys430, Cys437-Cys448, Cys442-Cys457, Cys459-Cys468, Cys475-Cys486, Cys480-Cys495, Cys497-Cys506, Cys513-Cys524, Cys518-Cys533, Cys535-Cys544, Cys551-Cys561, Cys556-Cys570, Cys572-Cys581, Cys588-Cys599, Cys593-Cys608, Cys610-Cys619, Cys626-Cys636, Cys631-Cys645, Cys647-Cys656, Cys663-Cys674, Cys668-Cys683, Cys685-Cys694, Cys701-Cys711, Cys706-Cys720, Cys722-Cys731, Cys740-Cys751, Cys745-Cys760, Cys762-Cys771, Cys777-Cys788, Cys782-Cys798, Cys800-Cys809, Cys816-Cys828, Cys822-Cys837, Cys839-Cys848, Cys855-Cys866, Cys860-Cys875, Cys877-Cys886, Cys893-Cys903, Cys898-Cys912, Cys914-Cys923, Cys930-Cys941, Cys935-Cys950, Cys952-Cys961, Cys968-Cys979, Cys973-Cys988, Cys990-Cys999, Cys1006-Cys1017, Cys1011-Cys1024, Cys1026-Cys1035, Cys1042-Cys1063, Cys1057-Cys1072, Cys1074-Cys1083, Cys1090-Cys1101, Cys1095-Cys1110, Cys1112-Cys1121, Cys1128-Cys1139, Cys1133-Cys1148, Cys1150-Cys1159, Cys1166-Cys1184, Cys1178-Cys1193, Cys1195-Cys1204, Cys1211-Cys1224, Cys1216-Cys1234, Cys1236-Cys1245, Cys1252-Cys1263, Cys1257-Cys1277, Cys1279-Cys1288, Cys1295-Cys1306, Cys1300-Cys1315, and Cys1317-Cys1326. Residues 160 to 197 (DIDECRAGASCRHGGTCINTPGSFHCLCPLGYTGLLCE) form the EGF-like 4; calcium-binding domain. Residues 199–236 (PIVPCAPSPCRNGGTCRQSSDVTYDCACLPGFEGQNCE) enclose the EGF-like 5 domain. The EGF-like 6; calcium-binding domain occupies 238 to 274 (NVDDCPGHRCLNGGTCVDGVNTYNCQCPPEWTGQFCT). In terms of domain architecture, EGF-like 7 spans 276-314 (DVDECQLQPNACHNGGTCFNLLGGHSCVCVNGWTGESCS). Residues 316-352 (NIDDCATAVCFHGATCHDRVASFYCACPMGKTGLLCH) enclose the EGF-like 8; calcium-binding domain. The EGF-like 9 domain occupies 353–391 (LDDACVSNPCHEDAICDTNPVSGRAICTCPPGFTGGACD). One can recognise an EGF-like 10; calcium-binding domain in the interval 393–431 (DVDECSIGANPCEHLGRCVNTQGSFLCQCGRGYTGPRCE). The EGF-like 11; calcium-binding domain maps to 433–469 (DVNECLSGPCRNQATCLDRIGQFTCICMAGFTGTFCE). Residues 471–507 (DIDECQSSPCVNGGVCKDRVNGFSCTCPSGFSGSTCQ) enclose the EGF-like 12; calcium-binding domain. The EGF-like 13; calcium-binding domain maps to 509 to 545 (DVDECASTPCRNGAKCVDQPDGYECRCAEGFEGTLCE). In terms of domain architecture, EGF-like 14; calcium-binding spans 547–582 (NVDDCSPDPCHHGRCVDGIASFSCACAPGYTGIRCE). In terms of domain architecture, EGF-like 15; calcium-binding spans 584-620 (QVDECRSQPCRYGGKCLDLVDKYLCRCPPGTTGVNCE). The EGF-like 16; calcium-binding domain occupies 622–657 (NIDDCASNPCTFGVCRDGINRYDCVCQPGFTGPLCN). The EGF-like 17; calcium-binding domain maps to 659-695 (EINECASSPCGEGGSCVDGENGFHCLCPPGSLPPLCL). EGF-like domains follow at residues 697–732 (ANHP…PRCS), 736–772 (APDA…HQCE), and 773–810 (VLSP…PRCQ). The region spanning 812–849 (DVDECAGASPCGPHGTCTNLPGSFRCICHGGYTGPFCD) is the EGF-like 21; calcium-binding domain. One can recognise an EGF-like 22; calcium-binding domain in the interval 851–887 (DIDDCDPNPCLNGGSCQDGVGSFSCSCLSGFAGPRCA). Residues 889 to 924 (DVDECLSSPCGPGTCTDHVASFTCTCPPGYGGFHCE) form the EGF-like 23; calcium-binding domain. EGF-like domains follow at residues 926–962 (DLLD…THCQ), 964–1000 (KVDP…NQCQ), 1002–1036 (PVDW…PLCD), 1038–1084 (PSLP…SHCE), and 1086–1122 (EVDP…DSCE). The region spanning 1124-1160 (DVDECASQPCQNGGSCIDLVAHYLCSCPPGTLGVLCE) is the EGF-like 29; calcium-binding domain. The 44-residue stretch at 1162 to 1205 (NEDDCGPGPSLDSGLRCLHNGTCVDLVGGFRCNCPPGYTGLHCE) folds into the EGF-like 30; calcium-binding domain. Residue Asn1181 is glycosylated (N-linked (GlcNAc...) asparagine). 4 consecutive EGF-like domains span residues 1207-1246 (DINE…PRCQ), 1248-1289 (ALFP…LRCE), 1291-1327 (VARS…PSCR), and 1337-1375 (TNTS…PRCE). A glycan (N-linked (GlcNAc...) asparagine) is linked at Asn1338. Intrachain disulfides connect Cys1341-Cys1352, Cys1346-Cys1363, Cys1365-Cys1374, Cys1389-Cys1412, Cys1394-Cys1407, Cys1403-Cys1419, Cys1430-Cys1453, Cys1435-Cys1448, Cys1444-Cys1460, Cys1469-Cys1495, Cys1477-Cys1490, and Cys1486-Cys1502. LNR repeat units follow at residues 1389-1429 (CPRA…PWRQ), 1430-1467 (CEAL…GRDR), and 1469-1507 (CNPV…SEVP). Asn1440 is a glycosylation site (N-linked (GlcNAc...) asparagine). A helical transmembrane segment spans residues 1646–1666 (LPLLVAGAVFLLVIFVLGVMV). The Cytoplasmic segment spans residues 1667-2319 (ARRKREHSTL…EVTPKRQVMA (653 aa)). ANK repeat units lie at residues 1840–1869 (TGET…DTNA), 1873–1903 (SGRT…DLDA), 1907–1936 (DGST…DVNA), 1940–1969 (LGKS…NKDM), and 1973–2002 (KEET…NREI). Disordered stretches follow at residues 2026 to 2046 (LDQP…PLLC) and 2059 to 2129 (QSGT…EGPY). Positions 2029–2046 (PSGPRSPSGPHGLGPLLC) are enriched in low complexity. At Arg2175 the chain carries Omega-N-methylarginine. The interval 2197 to 2319 (LNPATPVSPH…EVTPKRQVMA (123 aa)) is disordered. Residues 2263 to 2288 (SLSDWSDSTPSPATATSATAAGALPA) show a composition bias toward low complexity. Over residues 2297–2306 (SLPQSQTQLG) the composition is skewed to polar residues.

The protein belongs to the NOTCH family. Heterodimer of a C-terminal fragment N(TM) and a N-terminal fragment N(EC) which are probably linked by disulfide bonds. Interacts with MAML1, MAML2 and MAML3 which act as transcriptional coactivators for NOTCH3. Interacts with PSMA1. Interacts with HIF1AN. In terms of processing, synthesized in the endoplasmic reticulum as an inactive form which is proteolytically cleaved by a furin-like convertase in the trans-Golgi network before it reaches the plasma membrane to yield an active, ligand-accessible form. Cleavage results in a C-terminal fragment N(TM) and a N-terminal fragment N(EC). Following ligand binding, it is cleaved by TNF-alpha converting enzyme (TACE) to yield a membrane-associated intermediate fragment called notch extracellular truncation (NEXT). This fragment is then cleaved by presenilin dependent gamma-secretase to release a notch-derived peptide containing the intracellular domain (NICD) from the membrane. Phosphorylated. Post-translationally, hydroxylated by HIF1AN. As to expression, expressed in postnatal central nervous system (CNS) germinal zones and, in early postnatal life, within numerous cells throughout the CNS. It is more highly localized to ventricular germinal zones.

Its subcellular location is the cell membrane. It localises to the nucleus. Its function is as follows. Functions as a receptor for membrane-bound ligands Jagged1, Jagged2 and Delta1 to regulate cell-fate determination. Upon ligand activation through the released notch intracellular domain (NICD) it forms a transcriptional activator complex with RBPJ/RBPSUH and activates genes of the enhancer of split locus. Affects the implementation of differentiation, proliferation and apoptotic programs. Acts instructively to control the cell fate determination of CNS multipotent progenitor cells, resulting in astroglial induction and neuron/oligodendrocyte suppression. In Rattus norvegicus (Rat), this protein is Neurogenic locus notch homolog protein 3 (Notch3).